Here is a 242-residue protein sequence, read N- to C-terminus: Protein Thf1 (242 aa).

The stretch at 178 to 209 (SSDKLQKDLDLYRSNLDKMQQLLTVIEDTLEA) forms a coiled coil. The interval 212 to 242 (KKRASQKLEKKPEVVEEKEHKENEEQQQSSN) is disordered. Residues 217 to 235 (QKLEKKPEVVEEKEHKENE) are compositionally biased toward basic and acidic residues.

It belongs to the THF1 family.

Its function is as follows. May be involved in photosynthetic membrane biogenesis. The chain is Protein Thf1 from Crocosphaera subtropica (strain ATCC 51142 / BH68) (Cyanothece sp. (strain ATCC 51142)).